The following is a 235-amino-acid chain: Glycerol-3-phosphate acyltransferase (235 aa).

6 consecutive transmembrane segments (helical) span residues 4 to 24 (LIAILAISYLVGAIPTGIMAG), 56 to 76 (AVTLLDILKGIVAAVSIVAFF), 94 to 114 (LLAGMSAVIGHVFTVFAGFKG), 122 to 142 (AGMLIGIAPVSMLIVIGIFLL), 152 to 172 (VASILAAIAFPLIIAIRKYIF), and 191 to 211 (FHDSLDYHLMIFGLIVALAIL).

The protein belongs to the PlsY family. As to quaternary structure, probably interacts with PlsX.

It localises to the cell inner membrane. The enzyme catalyses an acyl phosphate + sn-glycerol 3-phosphate = a 1-acyl-sn-glycero-3-phosphate + phosphate. It functions in the pathway lipid metabolism; phospholipid metabolism. Its function is as follows. Catalyzes the transfer of an acyl group from acyl-phosphate (acyl-PO(4)) to glycerol-3-phosphate (G3P) to form lysophosphatidic acid (LPA). This enzyme utilizes acyl-phosphate as fatty acyl donor, but not acyl-CoA or acyl-ACP. The chain is Glycerol-3-phosphate acyltransferase from Chlorobium phaeobacteroides (strain DSM 266 / SMG 266 / 2430).